Here is a 360-residue protein sequence, read N- to C-terminus: Phenylalanine--tRNA ligase alpha subunit (360 aa).

Residue Glu260 coordinates Mg(2+).

Belongs to the class-II aminoacyl-tRNA synthetase family. Phe-tRNA synthetase alpha subunit type 1 subfamily. As to quaternary structure, tetramer of two alpha and two beta subunits. Mg(2+) is required as a cofactor.

It localises to the cytoplasm. The catalysed reaction is tRNA(Phe) + L-phenylalanine + ATP = L-phenylalanyl-tRNA(Phe) + AMP + diphosphate + H(+). This is Phenylalanine--tRNA ligase alpha subunit from Bartonella tribocorum (strain CIP 105476 / IBS 506).